The chain runs to 876 residues: MTGNEARKTFLDYFENQGHRVVRSSSLVPQADPTLLFVNAGMVQFKRVFMGEEKRDYTTATTSQKCVRAGGKHNDLENVGYTARHHTFFEMLGNFSFGDYFKERAIELAWDLLLNGYKLPEDKLSVSVFHEDDEAFSIWKDRIGLAESRIARLGEKDNFWSMGDTGPCGPCSEIYMDRGEKYGCGRPDCAPGCDCDRFMEIWNMVFMQYNRQASGELTPLPHPSIDTGMGLERICAVIQDRDTNYETDLFIPIIRGIEAASGKTYGQAPDMDVCMKVIADHSRAAAFLIGDGVLPSNEGKGYVLRRILRRAIRYGRQLGLTRPFLSRTAGTVFEVMAEPYPELKENASFITNVLENEEVRFSETLDNGLRLLSETLDGMAAKGESVIPGGVIFKLYDTYGFPVDIVRDVVREKMIGLDMEGFDAAMAEQKAKSRSVVDFSKQPEAYRNLSAKGMKTGFVGYAGLAAQATVLALVNGGSELETATAGQEIEIVTDTTPFYGASGGQMGDVGVITADGLEITVTDTIKDPTGLVIHKGQVASGTVKKGQTISLAVDEDRRRATAANHTATHLLHAALGGIVGDHVKQAGSMVSPDRMRFDFTHFSMLDRATLDRIEVFVNDRIRENRAVTISEMSMDQAMEQGATALFEEKYGDTVRVVAVDGVSKELCGGTHAQRTGDIGLFKILSEASVASGVRRIEAVTGAGAVAFVQEQMGILAEAAGMLKESPAALAARIQKLLAESRTMAKEIAGLKTSLATASMEGPKSDDAKTLNGVKVIARTVTADNPAALRDLADRLKDKLGSGVVVLGAAADGKAFLIVSVSRDLTGRFKAGDIVREAAAVVGGKGGGRPDMAQAGGPQPEHLEAAIQKACDMIGKG.

Zn(2+)-binding residues include His565, His569, Cys667, and His671.

Belongs to the class-II aminoacyl-tRNA synthetase family. Requires Zn(2+) as cofactor.

The protein localises to the cytoplasm. The catalysed reaction is tRNA(Ala) + L-alanine + ATP = L-alanyl-tRNA(Ala) + AMP + diphosphate. Functionally, catalyzes the attachment of alanine to tRNA(Ala) in a two-step reaction: alanine is first activated by ATP to form Ala-AMP and then transferred to the acceptor end of tRNA(Ala). Also edits incorrectly charged Ser-tRNA(Ala) and Gly-tRNA(Ala) via its editing domain. The chain is Alanine--tRNA ligase from Desulfosudis oleivorans (strain DSM 6200 / JCM 39069 / Hxd3) (Desulfococcus oleovorans).